Consider the following 382-residue polypeptide: Cell division protein FtsZ (382 aa).

Residues 21 to 25 (GGGNN), 108 to 110 (GTG), glutamate 139, arginine 143, and aspartate 187 contribute to the GTP site. Residues 320 to 382 (KDVTKPQRPS…TFLRNRNKRG (63 aa)) form a disordered region. Residues 326–341 (QRPSLNQSIKTHNQSV) show a composition bias toward polar residues. The span at 342–351 (PKREPKREEP) shows a compositional bias: basic and acidic residues. Positions 352 to 365 (QQQNTVSRHTSQPA) are enriched in polar residues.

The protein belongs to the FtsZ family. As to quaternary structure, homodimer. Polymerizes to form a dynamic ring structure in a strictly GTP-dependent manner. Interacts directly with several other division proteins. Interacts with FtsA. Interacts with Phi29 DNA replication protein 1. Interacts with the cell division inhibitor MciZ.

Its subcellular location is the cytoplasm. During sporulation, is negatively regulated by MciZ, which binds to FtsZ and inhibits its polymerization and the formation of the Z ring. In terms of biological role, essential cell division protein that forms a contractile ring structure (Z ring) at the future cell division site. The regulation of the ring assembly controls the timing and the location of cell division. One of the functions of the FtsZ ring is to recruit other cell division proteins to the septum to produce a new cell wall between the dividing cells. Binds GTP and shows GTPase activity. This chain is Cell division protein FtsZ, found in Bacillus subtilis (strain 168).